The chain runs to 205 residues: DNA-directed RNA polymerase subunit 5 (205 aa).

Belongs to the archaeal Rpo5/eukaryotic RPB5 RNA polymerase subunit family.

It localises to the virion. The enzyme catalyses RNA(n) + a ribonucleoside 5'-triphosphate = RNA(n+1) + diphosphate. Functionally, DNA-dependent RNA polymerase catalyzes the transcription of DNA into RNA using the four ribonucleoside triphosphates as substrates. The sequence is that of DNA-directed RNA polymerase subunit 5 from Acanthamoeba polyphaga (Amoeba).